Reading from the N-terminus, the 488-residue chain is Nitrogen metabolite repression protein nmr (488 aa).

A disordered region spans residues 1 to 45 (MPAEILSELPLRPAPRDIKIPNAMHNEERRHKHSRSSYSEMSPLM). The segment covering 14–29 (APRDIKIPNAMHNEER) has biased composition (basic and acidic residues). The segment covering 36–45 (SSYSEMSPLM) has biased composition (polar residues). Residues 71-76 (NAAGRQ), asparagine 165, lysine 215, and 237-240 (YNNN) contribute to the NADP(+) site. NAD(+)-binding positions include 75-76 (RQ), 165-167 (NTT), lysine 215, and 237-240 (YNNN). Residues 412–488 (EEYDGGGGNN…NKRADEEWLA (77 aa)) form a dispensable for NMR function region. Residues 422–488 (IGNNHNNHHQ…NKRADEEWLA (67 aa)) are disordered. Over residues 438–459 (HQNGHQNGHNGINGHIVNGGVD) the composition is skewed to low complexity. Residues 460 to 473 (SESEEEDSDSDDEG) are compositionally biased toward acidic residues.

The protein belongs to the NmrA-type oxidoreductase family. In terms of assembly, interacts with nit-2.

The protein resides in the nucleus. Functionally, may be a redox sensor protein. Negative transcriptional regulator involved in the post-transcriptional modulation of the GATA-type transcription factor nit-2, forming part of a system controlling nitrogen metabolite repression. The sequence is that of Nitrogen metabolite repression protein nmr (nmr) from Neurospora crassa (strain ATCC 24698 / 74-OR23-1A / CBS 708.71 / DSM 1257 / FGSC 987).